A 401-amino-acid chain; its full sequence is Argininosuccinate synthase (401 aa).

9 to 17 is a binding site for ATP; it reads AYSGGLDTS. Y86 is a binding site for L-citrulline. Position 116 (G116) interacts with ATP. L-aspartate contacts are provided by T118, N122, and D123. Residue N122 coordinates L-citrulline. Positions 126, 174, 183, 259, and 271 each coordinate L-citrulline.

Belongs to the argininosuccinate synthase family. Type 1 subfamily. In terms of assembly, homotetramer.

The protein localises to the cytoplasm. It carries out the reaction L-citrulline + L-aspartate + ATP = 2-(N(omega)-L-arginino)succinate + AMP + diphosphate + H(+). It functions in the pathway amino-acid biosynthesis; L-arginine biosynthesis; L-arginine from L-ornithine and carbamoyl phosphate: step 2/3. The sequence is that of Argininosuccinate synthase from Bacillus mycoides (strain KBAB4) (Bacillus weihenstephanensis).